We begin with the raw amino-acid sequence, 290 residues long: Undecaprenyl-diphosphatase (290 aa).

8 consecutive transmembrane segments (helical) span residues 1–21 (MALW…FLPV), 49–69 (MILF…VVFW), 101–121 (LFWL…TLKA), 126–146 (VFAS…LLWW), 160–180 (INLK…MPGL), 203–223 (YSFF…AIEV), 232–252 (VGFS…IISL), and 266–286 (VFSF…IDLA).

Belongs to the UppP family.

It is found in the cell inner membrane. It catalyses the reaction di-trans,octa-cis-undecaprenyl diphosphate + H2O = di-trans,octa-cis-undecaprenyl phosphate + phosphate + H(+). Its function is as follows. Catalyzes the dephosphorylation of undecaprenyl diphosphate (UPP). Confers resistance to bacitracin. The sequence is that of Undecaprenyl-diphosphatase from Alkalilimnicola ehrlichii (strain ATCC BAA-1101 / DSM 17681 / MLHE-1).